A 167-amino-acid chain; its full sequence is CDP-archaeol synthase (167 aa).

Transmembrane regions (helical) follow at residues 4–24 (ILEA…PVIL), 51–71 (GFLG…IIYP), 80–100 (FKVS…GSFI), 104–124 (LNLP…LISA), and 139–158 (VLLL…VLAY).

The protein belongs to the CDP-archaeol synthase family. Mg(2+) serves as cofactor.

Its subcellular location is the cell membrane. It carries out the reaction 2,3-bis-O-(geranylgeranyl)-sn-glycerol 1-phosphate + CTP + H(+) = CDP-2,3-bis-O-(geranylgeranyl)-sn-glycerol + diphosphate. It functions in the pathway membrane lipid metabolism; glycerophospholipid metabolism. Its function is as follows. Catalyzes the formation of CDP-2,3-bis-(O-geranylgeranyl)-sn-glycerol (CDP-archaeol) from 2,3-bis-(O-geranylgeranyl)-sn-glycerol 1-phosphate (DGGGP) and CTP. This reaction is the third ether-bond-formation step in the biosynthesis of archaeal membrane lipids. The sequence is that of CDP-archaeol synthase from Pyrococcus furiosus (strain ATCC 43587 / DSM 3638 / JCM 8422 / Vc1).